The chain runs to 93 residues: uncharacterized protein (93 aa).

A signal peptide spans 1 to 11 (MALMVLMALVG). C12 is lipidated: N-palmitoyl cysteine. C12 is lipidated: S-diacylglycerol cysteine.

The protein localises to the cell membrane. This is an uncharacterized protein from Escherichia coli O6:K15:H31 (strain 536 / UPEC).